Reading from the N-terminus, the 560-residue chain is Diphtheria toxin (560 aa).

Positions 1–25 are cleaved as a signal peptide; the sequence is MSRKLFASILIGALLGIGAPPSAHA. H46 and Y90 together coordinate NAD(+). E173 is a catalytic residue. 2 disulfides stabilise this stretch: C211–C226 and C486–C496.

In terms of assembly, homodimer.

The enzyme catalyses diphthamide-[translation elongation factor 2] + NAD(+) = N-(ADP-D-ribosyl)diphthamide-[translation elongation factor 2] + nicotinamide + H(+). Diphtheria toxin, produced by a phage infecting Corynebacterium diphtheriae, is a proenzyme that, after activation, catalyzes the covalent attachment of the ADP ribose moiety of NAD to elongation factor 2. Fragment A is responsible for enzymatic ADP-ribosylation of elongation factor 2, while fragment B is responsible for binding of toxin to cell receptors and entry of fragment A. This is Diphtheria toxin from Corynephage omega.